The chain runs to 169 residues: MYTSGYANRSSSFPTTTHNAARTATENAAAGLVSEVVYHEDQPMMAQLLLLPLLRQLGQQSRWQLWLTPQQKLSREWVQSSGLPLTKVMQISQLAPRHTLESMIRALRTGNYSVVIGWMTEELTEEEHASLVEAAKVGNAVGFIMRPVRAHALPRRQHSGLKIHSNLYH.

The segment at 106–112 (ALRTGNY) is ftsZ binding. The lon protease binding stretch occupies residues 162-169 (KIHSNLYH).

The protein belongs to the SulA family. In terms of assembly, interacts with FtsZ. Is rapidly cleaved and degraded by the Lon protease once DNA damage is repaired.

Its function is as follows. Component of the SOS system and an inhibitor of cell division. Accumulation of SulA causes rapid cessation of cell division and the appearance of long, non-septate filaments. In the presence of GTP, binds a polymerization-competent form of FtsZ in a 1:1 ratio, thus inhibiting FtsZ polymerization and therefore preventing it from participating in the assembly of the Z ring. This mechanism prevents the premature segregation of damaged DNA to daughter cells during cell division. The sequence is that of Cell division inhibitor SulA from Salmonella agona (strain SL483).